The sequence spans 157 residues: 2-C-methyl-D-erythritol 2,4-cyclodiphosphate synthase (157 aa).

The a divalent metal cation site is built by aspartate 8 and histidine 10. 4-CDP-2-C-methyl-D-erythritol 2-phosphate contacts are provided by residues 8 to 10 (DVH) and 34 to 35 (HS). An a divalent metal cation-binding site is contributed by histidine 42. 4-CDP-2-C-methyl-D-erythritol 2-phosphate-binding positions include 56–58 (DIG), 61–65 (FPDTD), 132–135 (TTEE), and phenylalanine 139.

It belongs to the IspF family. In terms of assembly, homotrimer. The cofactor is a divalent metal cation.

It carries out the reaction 4-CDP-2-C-methyl-D-erythritol 2-phosphate = 2-C-methyl-D-erythritol 2,4-cyclic diphosphate + CMP. It participates in isoprenoid biosynthesis; isopentenyl diphosphate biosynthesis via DXP pathway; isopentenyl diphosphate from 1-deoxy-D-xylulose 5-phosphate: step 4/6. Functionally, involved in the biosynthesis of isopentenyl diphosphate (IPP) and dimethylallyl diphosphate (DMAPP), two major building blocks of isoprenoid compounds. Catalyzes the conversion of 4-diphosphocytidyl-2-C-methyl-D-erythritol 2-phosphate (CDP-ME2P) to 2-C-methyl-D-erythritol 2,4-cyclodiphosphate (ME-CPP) with a corresponding release of cytidine 5-monophosphate (CMP). In Clostridium botulinum (strain Alaska E43 / Type E3), this protein is 2-C-methyl-D-erythritol 2,4-cyclodiphosphate synthase.